A 971-amino-acid chain; its full sequence is Exportin-2 (971 aa).

Residue Met-1 is modified to N-acetylmethionine. The Importin N-terminal domain occupies 29–102; that stretch reads AEKFLESVEG…KANIVHLMLS (74 aa). The residue at position 112 (Ser-112) is a Phosphoserine. N6-acetyllysine occurs at positions 574 and 824. At Ser-931 the chain carries Phosphoserine.

The protein belongs to the XPO2/CSE1 family. As to quaternary structure, found in a complex with CSE1L/XPO2, Ran and KPNA2. Binds with high affinity to importin-alpha only in the presence of RanGTP. The complex is dissociated by the combined action of RanBP1 and RanGAP1. Interacts with CFTR. Detected in brain, placenta, ovary, testis and trachea (at protein level). Widely expressed. Highly expressed in testis and in proliferating cells.

The protein localises to the cytoplasm. It is found in the nucleus. In terms of biological role, export receptor for importin-alpha. Mediates importin-alpha re-export from the nucleus to the cytoplasm after import substrates (cargos) have been released into the nucleoplasm. In the nucleus binds cooperatively to importin-alpha and to the GTPase Ran in its active GTP-bound form. Docking of this trimeric complex to the nuclear pore complex (NPC) is mediated through binding to nucleoporins. Upon transit of a nuclear export complex into the cytoplasm, disassembling of the complex and hydrolysis of Ran-GTP to Ran-GDP (induced by RANBP1 and RANGAP1, respectively) cause release of the importin-alpha from the export receptor. CSE1L/XPO2 then return to the nuclear compartment and mediate another round of transport. The directionality of nuclear export is thought to be conferred by an asymmetric distribution of the GTP- and GDP-bound forms of Ran between the cytoplasm and nucleus. The protein is Exportin-2 (CSE1L) of Homo sapiens (Human).